A 155-amino-acid polypeptide reads, in one-letter code: Ribosomal RNA large subunit methyltransferase H (155 aa).

S-adenosyl-L-methionine contacts are provided by residues leucine 72, glycine 103, and 122 to 127 (FGRMVW).

Belongs to the RNA methyltransferase RlmH family. In terms of assembly, homodimer.

Its subcellular location is the cytoplasm. The catalysed reaction is pseudouridine(1915) in 23S rRNA + S-adenosyl-L-methionine = N(3)-methylpseudouridine(1915) in 23S rRNA + S-adenosyl-L-homocysteine + H(+). Its function is as follows. Specifically methylates the pseudouridine at position 1915 (m3Psi1915) in 23S rRNA. In Cereibacter sphaeroides (strain ATCC 17023 / DSM 158 / JCM 6121 / CCUG 31486 / LMG 2827 / NBRC 12203 / NCIMB 8253 / ATH 2.4.1.) (Rhodobacter sphaeroides), this protein is Ribosomal RNA large subunit methyltransferase H.